A 506-amino-acid polypeptide reads, in one-letter code: Maturase K (506 aa).

The protein belongs to the intron maturase 2 family. MatK subfamily.

Its subcellular location is the plastid. It localises to the chloroplast. Its function is as follows. Usually encoded in the trnK tRNA gene intron. Probably assists in splicing its own and other chloroplast group II introns. This chain is Maturase K, found in Jasminum nudiflorum (Winter jasmine).